The sequence spans 180 residues: Nucleoside-triphosphatase THEP1 (180 aa).

ATP-binding positions include 8 to 15 and 100 to 107; these read GPVGSIKA and VIIIDELG.

It belongs to the THEP1 NTPase family.

The catalysed reaction is a ribonucleoside 5'-triphosphate + H2O = a ribonucleoside 5'-diphosphate + phosphate + H(+). Has nucleotide phosphatase activity towards ATP, GTP, CTP, TTP and UTP. May hydrolyze nucleoside diphosphates with lower efficiency. The chain is Nucleoside-triphosphatase THEP1 from Picrophilus torridus (strain ATCC 700027 / DSM 9790 / JCM 10055 / NBRC 100828 / KAW 2/3).